We begin with the raw amino-acid sequence, 234 residues long: Eukaryotic translation initiation factor 3 subunit K (234 aa).

The 174-residue stretch at 46-219 (SDIEANLALL…EAKPATTTES (174 aa)) folds into the PCI domain.

It belongs to the eIF-3 subunit K family. As to quaternary structure, component of the eukaryotic translation initiation factor 3 (eIF-3) complex.

It localises to the cytoplasm. Its function is as follows. Component of the eukaryotic translation initiation factor 3 (eIF-3) complex, which is involved in protein synthesis of a specialized repertoire of mRNAs and, together with other initiation factors, stimulates binding of mRNA and methionyl-tRNAi to the 40S ribosome. The eIF-3 complex specifically targets and initiates translation of a subset of mRNAs involved in cell proliferation. In Yarrowia lipolytica (strain CLIB 122 / E 150) (Yeast), this protein is Eukaryotic translation initiation factor 3 subunit K.